We begin with the raw amino-acid sequence, 561 residues long: uncharacterized protein (561 aa).

2 helical membrane passes run 29–49 (FIFN…KKII) and 80–100 (FLFH…ASII).

Its subcellular location is the cell membrane. This is an uncharacterized protein from Mycoplasma genitalium (strain ATCC 33530 / DSM 19775 / NCTC 10195 / G37) (Mycoplasmoides genitalium).